The chain runs to 151 residues: Large ribosomal subunit protein eL19 (151 aa).

The segment at 62–93 is disordered; that stretch reads RLKERRKKRSLKSEGKKSGSRKGKKGARANSK. Basic residues predominate over residues 79 to 88; sequence SGSRKGKKGA.

Belongs to the eukaryotic ribosomal protein eL19 family. As to quaternary structure, part of the 50S ribosomal subunit.

Binds to the 23S rRNA. The polypeptide is Large ribosomal subunit protein eL19 (Saccharolobus solfataricus (strain ATCC 35092 / DSM 1617 / JCM 11322 / P2) (Sulfolobus solfataricus)).